The following is a 306-amino-acid chain: Protoheme IX farnesyltransferase (306 aa).

A run of 9 helical transmembrane segments spans residues 35–55 (LIVF…PTWL), 61–81 (LIAC…NCLV), 106–126 (LTLA…YVWV), 129–149 (LTMW…TVIL), 157–177 (IVIG…AMTG), 183–203 (ALIL…ALAL), 224–244 (EFTR…CLMP), 245–265 (FIFK…SIGF), and 286–306 (RFSL…HYLI).

Belongs to the UbiA prenyltransferase family. Protoheme IX farnesyltransferase subfamily.

It is found in the cell inner membrane. It carries out the reaction heme b + (2E,6E)-farnesyl diphosphate + H2O = Fe(II)-heme o + diphosphate. Its pathway is porphyrin-containing compound metabolism; heme O biosynthesis; heme O from protoheme: step 1/1. Its function is as follows. Converts heme B (protoheme IX) to heme O by substitution of the vinyl group on carbon 2 of heme B porphyrin ring with a hydroxyethyl farnesyl side group. In Polaromonas naphthalenivorans (strain CJ2), this protein is Protoheme IX farnesyltransferase.